We begin with the raw amino-acid sequence, 353 residues long: MSKGIVALAMSGGVDSSVSAYILKERGYDVIGIYMDLWRDERKGYCNKSAAEDARRVAEKLDIPFHVINIEKKFKDNVIDYFIDEYLSGRTPNPCVACNKTIKFEAFFNAAKEFGADFMATGHYCKIEERNGRKVIVKAEDDKKDQTYMMYNLKQYQLERTIMPCGEYKKDHIREIAENIGLDVYNKKDSQEICFIPDNDHGGFIKRNYKSKIKQGNFVDKAGKIIGKHKGIIYYTIGQRKGLGIALGKPAYVIDINPITNEVVIGDEEDIFRTELIAKDVNFIPFDKLEKSMELEAKVRYSAKPSKATIIPLENNKVKVVFQNKQRAITKGQSVVFYDKDMLVGGGIIEEIV.

ATP contacts are provided by residues 9–16 (AMSGGVDS) and Met-35. The active-site Nucleophile is Cys-98. The cysteines at positions 98 and 194 are disulfide-linked. Gly-122 contacts ATP. Residues 144-146 (KDQ) are interaction with tRNA. Cys-194 functions as the Cysteine persulfide intermediate in the catalytic mechanism. The segment at 300-301 (RY) is interaction with tRNA.

This sequence belongs to the MnmA/TRMU family.

It localises to the cytoplasm. It catalyses the reaction S-sulfanyl-L-cysteinyl-[protein] + uridine(34) in tRNA + AH2 + ATP = 2-thiouridine(34) in tRNA + L-cysteinyl-[protein] + A + AMP + diphosphate + H(+). Its function is as follows. Catalyzes the 2-thiolation of uridine at the wobble position (U34) of tRNA, leading to the formation of s(2)U34. The polypeptide is tRNA-specific 2-thiouridylase MnmA 2 (Clostridium botulinum (strain ATCC 19397 / Type A)).